Here is a 189-residue protein sequence, read N- to C-terminus: Putative manganese efflux pump MntP (189 aa).

6 helical membrane-spanning segments follow: residues 3-23 (PVSL…AAIG), 41-61 (IIFG…GQAA), 65-85 (VADW…LHMI), 106-128 (WILA…GLAF), 141-161 (GLAT…LGAV), and 168-188 (MVGG…HLSA).

The protein belongs to the MntP (TC 9.B.29) family.

The protein localises to the cell inner membrane. Probably functions as a manganese efflux pump. The chain is Putative manganese efflux pump MntP from Pseudomonas aeruginosa (strain LESB58).